The primary structure comprises 59 residues: Large ribosomal subunit protein bL32 (59 aa).

Belongs to the bacterial ribosomal protein bL32 family.

This Mesoplasma florum (strain ATCC 33453 / NBRC 100688 / NCTC 11704 / L1) (Acholeplasma florum) protein is Large ribosomal subunit protein bL32.